A 502-amino-acid polypeptide reads, in one-letter code: Lysine--tRNA ligase (502 aa).

Residues 1–22 (MSDHEQAQAQSQDENQIMAERR) are disordered. 2 residues coordinate Mg(2+): glutamate 413 and glutamate 420.

This sequence belongs to the class-II aminoacyl-tRNA synthetase family. Homodimer. Requires Mg(2+) as cofactor.

The protein resides in the cytoplasm. It catalyses the reaction tRNA(Lys) + L-lysine + ATP = L-lysyl-tRNA(Lys) + AMP + diphosphate. The polypeptide is Lysine--tRNA ligase (Chromobacterium violaceum (strain ATCC 12472 / DSM 30191 / JCM 1249 / CCUG 213 / NBRC 12614 / NCIMB 9131 / NCTC 9757 / MK)).